A 341-amino-acid polypeptide reads, in one-letter code: DNA-directed RNA polymerase subunit alpha (341 aa).

An alpha N-terminal domain (alpha-NTD) region spans residues 1–223 (MEQKRPQLKA…DELSVFGNVE (223 aa)). Residues 268-341 (PQPFPTDQDT…LAQFGLALRD (74 aa)) form an alpha C-terminal domain (alpha-CTD) region.

This sequence belongs to the RNA polymerase alpha chain family. As to quaternary structure, homodimer. The RNAP catalytic core consists of 2 alpha, 1 beta, 1 beta' and 1 omega subunit. When a sigma factor is associated with the core the holoenzyme is formed, which can initiate transcription.

It catalyses the reaction RNA(n) + a ribonucleoside 5'-triphosphate = RNA(n+1) + diphosphate. Its function is as follows. DNA-dependent RNA polymerase catalyzes the transcription of DNA into RNA using the four ribonucleoside triphosphates as substrates. The chain is DNA-directed RNA polymerase subunit alpha from Deinococcus radiodurans (strain ATCC 13939 / DSM 20539 / JCM 16871 / CCUG 27074 / LMG 4051 / NBRC 15346 / NCIMB 9279 / VKM B-1422 / R1).